We begin with the raw amino-acid sequence, 376 residues long: MKAILALADGRVFTGKAFGARGEVTGEVVFNTSMTGYQEILTDPSYCGEIVTMTYPLIGNYGINPEDVESGRPHLSGFIVKEACPYPSNWRSTTTLDDYLKQNQIVGIQGIDTRALVRHIRDNGAQTGIISSIDLDPESLVEKARKAPSIVGRDLVKEVTCKEPYHWTEGPWDLSEGYQQQTGEPRYKVVAYDFGIKRNILRNLVAIGCDVTVVPATTPAQDVMAMNPDGVFLSNGPGDPEPIQYAQENIRQLLGKMPIFGICLGHQLLALALGGHTYKLKFGHRGGNQPVQRKAEGQVEITSQNHGFAVEGSSIDNTAVLTHINLNDNTIEGLEHCKLPAFSVQYHPEASPGPHDARYLFERFADLMEKNRQSQG.

Residues 1 to 184 (MKAILALADG…SEGYQQQTGE (184 aa)) are CPSase. Ser45, Gly236, and Gly238 together coordinate L-glutamine. The region spanning 188–374 (KVVAYDFGIK…ADLMEKNRQS (187 aa)) is the Glutamine amidotransferase type-1 domain. Cys263 functions as the Nucleophile in the catalytic mechanism. L-glutamine is bound by residues Leu264, Gln267, Asn305, Gly307, and Phe308. Catalysis depends on residues His347 and Glu349.

The protein belongs to the CarA family. As to quaternary structure, composed of two chains; the small (or glutamine) chain promotes the hydrolysis of glutamine to ammonia, which is used by the large (or ammonia) chain to synthesize carbamoyl phosphate. Tetramer of heterodimers (alpha,beta)4.

It catalyses the reaction hydrogencarbonate + L-glutamine + 2 ATP + H2O = carbamoyl phosphate + L-glutamate + 2 ADP + phosphate + 2 H(+). The enzyme catalyses L-glutamine + H2O = L-glutamate + NH4(+). It participates in amino-acid biosynthesis; L-arginine biosynthesis; carbamoyl phosphate from bicarbonate: step 1/1. It functions in the pathway pyrimidine metabolism; UMP biosynthesis via de novo pathway; (S)-dihydroorotate from bicarbonate: step 1/3. Functionally, small subunit of the glutamine-dependent carbamoyl phosphate synthetase (CPSase). CPSase catalyzes the formation of carbamoyl phosphate from the ammonia moiety of glutamine, carbonate, and phosphate donated by ATP, constituting the first step of 2 biosynthetic pathways, one leading to arginine and/or urea and the other to pyrimidine nucleotides. The small subunit (glutamine amidotransferase) binds and cleaves glutamine to supply the large subunit with the substrate ammonia. The sequence is that of Carbamoyl phosphate synthase small chain from Syntrophotalea carbinolica (strain DSM 2380 / NBRC 103641 / GraBd1) (Pelobacter carbinolicus).